The sequence spans 397 residues: MKLSQRVQAIKPSPTLAVTAKAARLKAEGKNIIGLGAGEPDFDTPLHIKDAAITAIRNGFTKYTAVGGTASLKQAIISKFKRENSLEFMPGEILVSSGGKQSFFNLVLATIDPGDEVIIPAPYWVSYPDIVLIAEGKPVFIDTGIEEKFKISPDQLEKAITPRTRMFVVNSPSNPSGSVYSLEELQALGAVLRKYPDILIATDDMYEHILLSGDGFVNILNACPDLKARTVVLNGVSKAYAMTGWRIGYCGGPAAIITAMENIQSQSTSNPNSIAQVAAEAALNGDQSCMVPMIEAFRERNQFLTNALNSIAGIHCLLSEGAFYAFVDVRQAISRLNTQQILQNSSDIAFCNYVLEKAEVAAVPGSAFGCEGYMRLSFATSMDNLQEAVKRIASLLS.

Residues Gly38, Trp124, and Asn174 each contribute to the L-aspartate site. Position 238 is an N6-(pyridoxal phosphate)lysine (Lys238). Arg375 contributes to the L-aspartate binding site.

The protein belongs to the class-I pyridoxal-phosphate-dependent aminotransferase family. Homodimer. The cofactor is pyridoxal 5'-phosphate.

It localises to the cytoplasm. It carries out the reaction L-aspartate + 2-oxoglutarate = oxaloacetate + L-glutamate. It catalyses the reaction L-arogenate + 2-oxoglutarate = prephenate + L-glutamate. Catalyzes the reversible conversion of aspartate and 2-oxoglutarate to glutamate and oxaloacetate. Can also transaminate prephenate in the presence of glutamate, with lower efficiency. The polypeptide is Aspartate/prephenate aminotransferase (Nitrosomonas europaea (strain ATCC 19718 / CIP 103999 / KCTC 2705 / NBRC 14298)).